A 233-amino-acid chain; its full sequence is Cytochrome c oxidase subunit 3 (233 aa).

4 helical membrane passes run 62-82 (VVLF…AYLI), 98-118 (LELL…FVMH), 135-155 (WFGI…YEYF), and 172-192 (VLTG…LSVL).

Belongs to the cytochrome c oxidase subunit 3 family.

Its subcellular location is the cell membrane. It catalyses the reaction 4 Fe(II)-[cytochrome c] + O2 + 8 H(+)(in) = 4 Fe(III)-[cytochrome c] + 2 H2O + 4 H(+)(out). This chain is Cytochrome c oxidase subunit 3 (ctaE), found in Synechocystis sp. (strain ATCC 27184 / PCC 6803 / Kazusa).